Consider the following 420-residue polypeptide: Glutamyl-tRNA reductase (420 aa).

Substrate contacts are provided by residues 49–52 (TCNR), serine 107, 112–114 (EPQ), and glutamine 118. Catalysis depends on cysteine 50, which acts as the Nucleophile. Residue 187-192 (GAGETI) coordinates NADP(+).

The protein belongs to the glutamyl-tRNA reductase family. Homodimer.

The catalysed reaction is (S)-4-amino-5-oxopentanoate + tRNA(Glu) + NADP(+) = L-glutamyl-tRNA(Glu) + NADPH + H(+). The protein operates within porphyrin-containing compound metabolism; protoporphyrin-IX biosynthesis; 5-aminolevulinate from L-glutamyl-tRNA(Glu): step 1/2. In terms of biological role, catalyzes the NADPH-dependent reduction of glutamyl-tRNA(Glu) to glutamate 1-semialdehyde (GSA). In Photobacterium profundum (strain SS9), this protein is Glutamyl-tRNA reductase.